The primary structure comprises 304 residues: Recombination-associated protein RdgC (304 aa).

The protein belongs to the RdgC family.

It localises to the cytoplasm. It is found in the nucleoid. Its function is as follows. May be involved in recombination. In Shewanella baltica (strain OS185), this protein is Recombination-associated protein RdgC.